Consider the following 150-residue polypeptide: Large ribosomal subunit protein bL9 (150 aa).

It belongs to the bacterial ribosomal protein bL9 family.

In terms of biological role, binds to the 23S rRNA. In Pseudoalteromonas translucida (strain TAC 125), this protein is Large ribosomal subunit protein bL9.